A 165-amino-acid polypeptide reads, in one-letter code: Pyruvoyl-dependent arginine decarboxylase (165 aa).

Residue S53 is modified to Pyruvic acid (Ser).

This sequence belongs to the PdaD family. In terms of assembly, trimer of an alpha-beta dimer. Pyruvate is required as a cofactor.

The enzyme catalyses L-arginine + H(+) = agmatine + CO2. The protein is Pyruvoyl-dependent arginine decarboxylase (pdaD) of Methanocaldococcus jannaschii (strain ATCC 43067 / DSM 2661 / JAL-1 / JCM 10045 / NBRC 100440) (Methanococcus jannaschii).